The sequence spans 219 residues: Probable GTP-binding protein EngB (219 aa).

Positions 31–205 (VGVEIAFAGR…LAILNEWCHP (175 aa)) constitute an EngB-type G domain. GTP is bound by residues 39-46 (GRSNAGKS), 66-70 (GRTQL), 84-87 (DLPG), 151-154 (TKSD), and 184-186 (FSS). S46 and T68 together coordinate Mg(2+).

This sequence belongs to the TRAFAC class TrmE-Era-EngA-EngB-Septin-like GTPase superfamily. EngB GTPase family. Mg(2+) serves as cofactor.

Necessary for normal cell division and for the maintenance of normal septation. In Shewanella baltica (strain OS223), this protein is Probable GTP-binding protein EngB.